A 154-amino-acid chain; its full sequence is Transcriptional repressor NrdR (154 aa).

A zinc finger spans residues 3-34 (CPFCNAPDTKVIDSRLATEGAQVRRRRECMSC). Residues 49 to 139 (PRVIKSDGNR…VYRSFQDVNA (91 aa)) form the ATP-cone domain.

The protein belongs to the NrdR family. Zn(2+) serves as cofactor.

Negatively regulates transcription of bacterial ribonucleotide reductase nrd genes and operons by binding to NrdR-boxes. This chain is Transcriptional repressor NrdR, found in Hydrogenovibrio crunogenus (strain DSM 25203 / XCL-2) (Thiomicrospira crunogena).